We begin with the raw amino-acid sequence, 197 residues long: Guanylate kinase (197 aa).

Positions 6-191 (SKLIILSGPS…CVAQIEKIIS (186 aa)) constitute a Guanylate kinase-like domain. Position 13 to 20 (13 to 20 (GPSGVGKG)) interacts with ATP.

This sequence belongs to the guanylate kinase family.

Its subcellular location is the cytoplasm. The catalysed reaction is GMP + ATP = GDP + ADP. Its function is as follows. Essential for recycling GMP and indirectly, cGMP. The protein is Guanylate kinase of Mesomycoplasma hyopneumoniae (strain 7448) (Mycoplasma hyopneumoniae).